We begin with the raw amino-acid sequence, 1088 residues long: RNA-directed RNA polymerase (1088 aa).

The region spanning 501–687 is the RdRp catalytic domain; sequence LSYGDVTRFL…AKRYIAGGKI (187 aa).

The protein belongs to the reoviridae RNA-directed RNA polymerase family. As to quaternary structure, interacts with VP3 (Potential). Interacts with VP2; this interaction activates VP1. Interacts with NSP5; this interaction is probably necessary for the formation of functional virus factories. Interacts with NSP2; this interaction is weak. Requires Mg(2+) as cofactor.

It localises to the virion. It catalyses the reaction RNA(n) + a ribonucleoside 5'-triphosphate = RNA(n+1) + diphosphate. RNA-directed RNA polymerase that is involved in both transcription and genome replication. Together with VP3 capping enzyme, forms an enzyme complex positioned near the channels situated at each of the five-fold vertices of the core. Following infection, the outermost layer of the virus is lost, leaving a double-layered particle (DLP) made up of the core and VP6 shell. VP1 then catalyzes the transcription of fully conservative plus-strand genomic RNAs that are extruded through the DLP's channels into the cytoplasm where they function as mRNAs for translation of viral proteins. One copy of each of the viral (+)RNAs is also recruited during core assembly, together with newly synthesized polymerase complexes and VP2. The polymerase of these novo-formed particles catalyzes the synthesis of complementary minus-strands leading to dsRNA formation. To do so, the polymerase specifically recognizes and binds 4 bases 5'-UGUG-3' in the conserved 3'-sequence of plus-strand RNA templates. VP2 presumably activates the autoinhibited VP1-RNA complex to coordinate packaging and genome replication. Once dsRNA synthesis is complete, the polymerase switches to the transcriptional mode, thus providing secondary transcription. In Chlorocebus pygerythrus (Vervet monkey), this protein is RNA-directed RNA polymerase.